We begin with the raw amino-acid sequence, 153 residues long: Putative OPA3-like protein CG43998 (153 aa).

Positions 101-153 (ELSKTYTKTKKQNQEIEDQKRVLDECVDCISADVERNQREINWIKAALKNVEK) form a coiled coil.

Belongs to the OPA3 family.

This is Putative OPA3-like protein CG43998 from Drosophila melanogaster (Fruit fly).